The primary structure comprises 648 residues: RalA-binding protein 1 (648 aa).

Positions 1–158 (MTECFLPPSS…KKSKDLTAAD (158 aa)) are disordered. Thr-2 carries the N-acetylthreonine modification. Polar residues predominate over residues 24 to 33 (LTRTPSSEEI). Phosphoserine occurs at positions 29, 30, and 34. Thr-44 is subject to Phosphothreonine. Ser-48 and Ser-62 each carry phosphoserine. Residues 52–68 (DVLHEPPDTVSDDDKDH) show a composition bias toward basic and acidic residues. 69-74 (GKKKGK) serves as a coordination point for ATP. Residues 69–79 (GKKKGKFKKKE) are compositionally biased toward basic residues. Residues Ser-92 and Ser-93 each carry the phosphoserine modification. Residues 102-118 (KVKRSKGIHVFKKPSFS) show a composition bias toward basic residues. Residues 102–119 (KVKRSKGIHVFKKPSFSK) are nuclear localization signal. Residues 119–155 (KKKEKDFKIKEKPKEEKHKEEKHKEEKHKEKKSKDLT) are compositionally biased toward basic and acidic residues. Residues 154–219 (LTAADVVKQW…PAVFRECVDY (66 aa)) form a mediates association with membranes and could form transmembrane domains region. Residues 192–380 (VPLVDAVERT…VVLKQVTRPL (189 aa)) enclose the Rho-GAP domain. The segment at 403-499 (RRQEFLLNCL…LTEQEELLAM (97 aa)) is mediates interaction with RALA and RALB. 418 to 425 (GGIKDLSK) provides a ligand contact to ATP. Phosphoserine occurs at positions 461 and 463. The segment at 500 to 648 (EQFLRRQIAS…PSKDRKETPI (149 aa)) is mediates interaction with REPS1 and REPS2. Disordered stretches follow at residues 525 to 552 (QSRQQHGRSETEEYSSDSESESEDEEEL) and 598 to 648 (RAKS…ETPI). Residues 536 to 552 (EEYSSDSESESEDEEEL) show a composition bias toward acidic residues. A compositionally biased stretch (basic and acidic residues) spans 629 to 648 (RVAKEQAKASPSKDRKETPI). Ser-638 is modified (phosphoserine).

In terms of assembly, interacts with the GTP-bound form of RALA (via effector domain); during mitosis, recruits RALBP1 to the mitochondrion where it promotes DNM1L phosphorylation and mitochondrial fission. Interacts with DNM1L; mediates its mitotic kinase cyclin B-CDK1-mediated phosphorylation during mitosis to promote mitochondrial fission. Interacts with the mitotic kinase cyclin B-CDK1 during mitosis. Interacts with the GTP-bound form of RALB (via effector domain). Interacts with REPS1; the interaction is direct and does not affect RALA-binding nor GTPase activator activity of RALBP1. Interacts with REPS2; the interaction is direct and does not affect RALA-binding nor GTPase activator activity of RALBP1. Interacts with EPN1, NUMB and TFAP2A during interphase and mitosis. Interacts with AP2M1; as part of the AP2 complex. Interacts with CDC42. Interacts with RAC1. In terms of processing, tyrosine-phosphorylated upon stimulation of cells with EGF. May undergo proteolytic cleavage to give peptides which reassemble to form a transporter complex. In terms of tissue distribution, ubiquitous. The highest level of expression was observed in ovaries and skeletal muscle, whereas the lowest was found in spleen, liver and peripheral blood leukocytes.

It is found in the cell membrane. Its subcellular location is the cytoplasm. It localises to the cytosol. The protein resides in the cytoskeleton. The protein localises to the spindle pole. It is found in the nucleus. Its subcellular location is the mitochondrion. The enzyme catalyses an S-substituted glutathione(in) + ATP + H2O = an S-substituted glutathione(out) + ADP + phosphate + H(+). It carries out the reaction ATP + H2O + xenobioticSide 1 = ADP + phosphate + xenobioticSide 2.. It catalyses the reaction leukotriene C4(in) + ATP + H2O = leukotriene C4(out) + ADP + phosphate + H(+). Multifunctional protein that functions as a downstream effector of RALA and RALB. As a GTPase-activating protein/GAP can inactivate CDC42 and RAC1 by stimulating their GTPase activity. As part of the Ral signaling pathway, may also regulate ligand-dependent EGF and insulin receptors-mediated endocytosis. During mitosis, may act as a scaffold protein in the phosphorylation of EPSIN/EPN1 by the mitotic kinase cyclin B-CDK1, preventing endocytosis during that phase of the cell cycle. During mitosis, also controls mitochondrial fission as an effector of RALA. Recruited to mitochondrion by RALA, acts as a scaffold to foster the mitotic kinase cyclin B-CDK1-mediated phosphorylation and activation of DNM1L. Its function is as follows. Could also function as a primary ATP-dependent active transporter for glutathione conjugates of electrophiles. May also actively catalyze the efflux of a wide range of substrates including xenobiotics like doxorubicin (DOX) contributing to cell multidrug resistance. The sequence is that of RalA-binding protein 1 from Mus musculus (Mouse).